The sequence spans 599 residues: Adenine deaminase (599 aa).

This sequence belongs to the metallo-dependent hydrolases superfamily. Adenine deaminase family. The cofactor is Mn(2+).

The enzyme catalyses adenine + H2O + H(+) = hypoxanthine + NH4(+). This Clostridium botulinum (strain Langeland / NCTC 10281 / Type F) protein is Adenine deaminase.